The following is a 689-amino-acid chain: MSEKTFLVEIGTEELPPKALRSLAESFAANFTAELDNAGLAHGNVEWFAAPRRLALKVANLAESQPDREVEKRGPAIAQAFDAEGKPSKAAEGWARGCGITVDQAERLKTDKGEWLLYRAHVKGESTEALVPNMVATSLAKLPIPKLMRWGASDVHFVRPVHTVTLLLGDKVIPAIILGIQSDRVIRGHRFMGEPEFTIDNADQYPQILLERGKVIADYEARKAKIKADAEEAARKIGGNADLSESLLEEVASLVEWPVVLTAKFEEKFLAVPAEALVYTMKGDQKYFPVYDNAGKLLPNFIFVANIESKDPTQIISGNEKVVRPRLADAEFFFNTDRKKRLEDHLPRLQTVLFQQQLGTLRDKTDRIQALAGWIAGQIGADVNHATRAGLLSKCDLMTNMVFEFTDTQGVMGMHYARHDGEAEDVAVALNEQYQPRFAGDDLPSNPVACALAIADKMDTLAGIFGIGQHPKGDKDPFALRRAALGVLRIIVEKNLNLDLQTLTEEAARLYGDKLTNANVVDDVIDFMLGRFRAWYQDEGYTVDTIQAVLARRPTRPADFDARMKAVSHFRTLEEASALAAANKRVSNILAKATEPLNDIVHASVLKEAAEIELARHLVVLRDKLQPYFADGRYQEALIELAALRAPVDEFFENVMVNAEEKDIRINRLTLLSKLRELFLQVADISLLQ.

It belongs to the class-II aminoacyl-tRNA synthetase family. Tetramer of two alpha and two beta subunits.

It localises to the cytoplasm. The catalysed reaction is tRNA(Gly) + glycine + ATP = glycyl-tRNA(Gly) + AMP + diphosphate. This chain is Glycine--tRNA ligase beta subunit, found in Salmonella agona (strain SL483).